The sequence spans 560 residues: Beta-glucosidase 26, peroxisomal (560 aa).

Residues Gln-33, His-137, 182–183 (NE), Tyr-326, Glu-398, Trp-450, 457–458 (EW), and Tyr-466 each bind a beta-D-glucoside. The Proton donor role is filled by Glu-183. Catalysis depends on Glu-398, which acts as the Nucleophile.

It belongs to the glycosyl hydrolase 1 family.

The protein resides in the peroxisome. It catalyses the reaction Hydrolysis of terminal, non-reducing beta-D-glucosyl residues with release of beta-D-glucose.. Possesses beta-glucosidase activity toward 4-methyl-umbelliferyl-beta-D-glucoside in vitro. Possesses myrosinase activity toward indol-3-yl-methylglucosinolate (I3M) and 4-methoxy-indol-3-yl-methylglucosinolate (4MO-I3M) in vivo. Component of an inducible preinvasion resistance mechanism that prevents penetration of the nonhost fungal species B.graminis and E.pisi. Involved in indole glucosinolate (IGS) activation during pattern-triggered immunity (PTI). Functions as a myrosinase for the breakdown of flg22-triggered IGS. Required for both callose deposition and glucosinolate activation during pathogen-triggered resistance. During fungal attack, required for IGS activation that mediates broad-spectrum antifungal defense. The polypeptide is Beta-glucosidase 26, peroxisomal (Arabidopsis thaliana (Mouse-ear cress)).